The following is a 137-amino-acid chain: Maltose regulon regulatory protein MalI (137 aa).

Residues 6-60 (VTITEVAKHAGVSVTTVSMVLGNKGRISPDTIEKVNASVEALGYIRNRAAANLRS) enclose the HTH lacI-type domain. A DNA-binding region (H-T-H motif) is located at residues 8–27 (ITEVAKHAGVSVTTVSMVLG).

Its function is as follows. Repressor for the malX and malY genes. The sequence is that of Maltose regulon regulatory protein MalI (malI) from Vibrio furnissii.